Reading from the N-terminus, the 425-residue chain is CAAX prenyl protease 1 homolog (425 aa).

5 consecutive transmembrane segments (helical) span residues 3 to 23, 62 to 80, 109 to 129, 155 to 175, and 188 to 208; these read LPYL…ETYL, FHFI…ILYY, LAFL…FSLY, GILL…IIVQ, and FMFA…APLF. Residue histidine 284 coordinates Zn(2+). The active site involves glutamate 285. Histidine 288 serves as a coordination point for Zn(2+). Helical transmembrane passes span 295–315 and 332–352; these read VYSF…YTLV and VIIG…LLSF. Position 362 (glutamate 362) interacts with Zn(2+). Aspartate 366 functions as the Proton donor in the catalytic mechanism.

The protein belongs to the peptidase M48A family. Requires Zn(2+) as cofactor.

It is found in the endoplasmic reticulum membrane. It catalyses the reaction Hydrolyzes the peptide bond -P2-(S-farnesyl or geranylgeranyl)C-P1'-P2'-P3'-COOH where P1' and P2' are amino acids with aliphatic side chains and P3' is any C-terminal residue.. In terms of biological role, proteolytically removes the C-terminal three residues of farnesylated proteins. This chain is CAAX prenyl protease 1 homolog (FACE1), found in Oryza sativa subsp. japonica (Rice).